The following is a 454-amino-acid chain: Chromosomal replication initiator protein DnaA (454 aa).

A domain I, interacts with DnaA modulators region spans residues Met-1 to Tyr-79. Positions Tyr-79–Ser-117 are domain II. A domain III, AAA+ region region spans residues Asn-118–Ala-334. Positions 162, 164, 165, and 166 each coordinate ATP. Positions Asn-335–Val-454 are domain IV, binds dsDNA.

The protein belongs to the DnaA family. In terms of assembly, oligomerizes as a right-handed, spiral filament on DNA at oriC.

The protein localises to the cytoplasm. Its function is as follows. Plays an essential role in the initiation and regulation of chromosomal replication. ATP-DnaA binds to the origin of replication (oriC) to initiate formation of the DNA replication initiation complex once per cell cycle. Binds the DnaA box (a 9 base pair repeat at the origin) and separates the double-stranded (ds)DNA. Forms a right-handed helical filament on oriC DNA; dsDNA binds to the exterior of the filament while single-stranded (ss)DNA is stabiized in the filament's interior. The ATP-DnaA-oriC complex binds and stabilizes one strand of the AT-rich DNA unwinding element (DUE), permitting loading of DNA polymerase. After initiation quickly degrades to an ADP-DnaA complex that is not apt for DNA replication. Binds acidic phospholipids. The sequence is that of Chromosomal replication initiator protein DnaA from Buchnera aphidicola subsp. Schizaphis graminum (strain Sg).